A 256-amino-acid chain; its full sequence is Dihydromonacolin L-[lovastatin nonaketide synthase] thioesterase (256 aa).

Catalysis depends on charge relay system residues Ser-122, Asp-201, and His-229.

This sequence belongs to the LovG family.

The catalysed reaction is dihydromonacolin L-[lovastatin nonaketide synthase] + H2O = holo-[lovastatin nonaketide synthase] + dihydromonacolin L carboxylate + H(+). It functions in the pathway polyketide biosynthesis; lovastatin biosynthesis. In terms of biological role, esterase; part of the gene cluster that mediates the biosynthesis of lovastatin (also known as mevinolin, mevacor or monacolin K), a hypolipidemic inhibitor of (3S)-hydroxymethylglutaryl-coenzyme A (HMG-CoA) reductase (HMGR). The first step in the biosynthesis of lovastatin is the production of dihydromonacolin L acid by the lovastatin nonaketide synthase lovB and the trans-acting enoyl reductase lovC via condensation of one acetyl-CoA unit and 8 malonyl-CoA units. Dihydromonacolin L acid is released from lovB by the thioesterase lovG. Next, dihydromonacolin L acid is oxidized by the dihydromonacolin L monooxygenase lovA twice to form monacolin J acid. The 2-methylbutyrate moiety of lovastatin is synthesized by the lovastatin diketide synthase lovF via condensation of one acetyl-CoA unit and one malonyl-CoA unit. Finally, the covalent attachment of this moiety to monacolin J acid is catalyzed by the transesterase lovD to yield lovastatin. LovD has broad substrate specificity and can also convert monacolin J to simvastatin using alpha-dimethylbutanoyl-S-methyl-3-mercaptopropionate (DMB-S-MMP) as the thioester acyl donor, and can also catalyze the reverse reaction and function as hydrolase in vitro. LovD has much higher activity with LovF-bound 2-methylbutanoate than with free diketide substrates. Esterase that catalyzes the release of covalently bound dihydromonacolin L from LovB during lovastatin biosynthesis. In Aspergillus terreus (strain NIH 2624 / FGSC A1156), this protein is Dihydromonacolin L-[lovastatin nonaketide synthase] thioesterase.